Consider the following 985-residue polypeptide: Rho guanine nucleotide exchange factor 2 (985 aa).

Positions 1–32 (MSRIESLTRARIDRSKEQATKTREKEKMKEAK) are disordered. Residues 39-86 (GHLFTTISVSGMTMCYACNKSITAKEALICPTCNVTIHNRCKDTLANC) form a Phorbol-ester/DAG-type zinc finger. Phosphoserine is present on residues Ser-109, Ser-122, Ser-129, Ser-133, and Ser-137. The interaction with DYNLT1 stretch occupies residues 131–161 (RQSLLGSRRGLSSLSLAKSVSTTNIAGHFND). Ser-143 carries the post-translational modification Phosphoserine; by PAK4. 5 positions are modified to phosphoserine: Ser-151, Ser-163, Ser-172, Ser-174, and Ser-177. Residues 236 to 433 (KKQDVIYELI…KELLSNVDQD (198 aa)) enclose the DH domain. N6-acetyllysine is present on Lys-354. Positions 473–572 (KLIHDGCLLW…WIRVIQQSVR (100 aa)) constitute a PH domain. Residues 591–615 (LRRIKTKLQQKNQALVELLQMNVEL) adopt a coiled-coil conformation. 2 positions are modified to phosphoserine: Ser-646 and Ser-649. Thr-680 carries the post-translational modification Phosphothreonine; by MAPK1 or MAPK3. Residues Ser-692, Ser-710, and Ser-781 each carry the phosphoserine modification. Thr-795 is subject to Phosphothreonine. Positions 797 to 866 (EKQATELALL…RQLAALGQNE (70 aa)) form a coiled coil. The residue at position 885 (Ser-885) is a Phosphoserine. 2 disordered regions span residues 890-909 (DALY…DRLD) and 918-985 (HRPF…ASES). Tyr-893 carries the post-translational modification Phosphotyrosine. At Ser-895 the chain carries Phosphoserine; by PAK4. The segment covering 919-938 (RPFDDREAQELGSPEDRLQD) has biased composition (basic and acidic residues). A phosphoserine mark is found at Ser-931, Ser-939, and Ser-940. The segment covering 940–949 (SDPDTCSEEE) has biased composition (acidic residues). Thr-944 is modified (phosphothreonine). A phosphoserine mark is found at Ser-946, Ser-951, Ser-952, Ser-955, and Ser-959.

Found in a complex composed at least of ARHGEF2, NOD2 and RIPK2. Interacts with RIPK2; the interaction mediates tyrosine phosphorylation of RIPK2 by Src kinase CSK. Interacts with RIPK1 and RIPK3. Interacts with YWHAZ/14-3-3 zeta; when phosphorylated at Ser-885. Interacts with the kinases PAK4, AURKA and MAPK1. Interacts with RHOA and RAC1. Interacts with NOD1. Interacts (via the N- terminal zinc finger) with CAPN6 (via domain II). Interacts with DYNLT1. Phosphorylation of Ser-885 by PAK1 induces binding to protein YWHAZ, promoting its relocation to microtubules and the inhibition of its activity. Phosphorylated by AURKA and CDK1 during mitosis, which negatively regulates its activity. Phosphorylation by MAPK1 or MAPK3 increases nucleotide exchange activity. Phosphorylation by PAK4 releases GEF-H1 from the microtubules. Phosphorylated on serine, threonine and tyrosine residues in a RIPK2-dependent manner.

The protein localises to the cytoplasm. It localises to the cytoskeleton. Its subcellular location is the cell junction. It is found in the tight junction. The protein resides in the golgi apparatus. The protein localises to the spindle. It localises to the cytoplasmic vesicle. In terms of biological role, activates Rho-GTPases by promoting the exchange of GDP for GTP. May be involved in epithelial barrier permeability, cell motility and polarization, dendritic spine morphology, antigen presentation, leukemic cell differentiation, cell cycle regulation, innate immune response, and cancer. Binds Rac-GTPases, but does not seem to promote nucleotide exchange activity toward Rac-GTPases. May stimulate instead the cortical activity of Rac. Inactive toward CDC42, TC10, or Ras-GTPases. Forms an intracellular sensing system along with NOD1 for the detection of microbial effectors during cell invasion by pathogens. Involved in innate immune signaling transduction pathway promoting cytokine IL6/interleukin-6 and TNF-alpha secretion in macrophage upon stimulation by bacterial peptidoglycans; acts as a signaling intermediate between NOD2 receptor and RIPK2 kinase. Contributes to the tyrosine phosphorylation of RIPK2 through Src tyrosine kinase leading to NF-kappaB activation by NOD2. Overexpression activates Rho-, but not Rac-GTPases, and increases paracellular permeability. Involved in neuronal progenitor cell division and differentiation. Involved in the migration of precerebellar neurons. This chain is Rho guanine nucleotide exchange factor 2 (Arhgef2), found in Rattus norvegicus (Rat).